The primary structure comprises 115 residues: Large ribosomal subunit protein bL19 (115 aa).

Belongs to the bacterial ribosomal protein bL19 family.

In terms of biological role, this protein is located at the 30S-50S ribosomal subunit interface and may play a role in the structure and function of the aminoacyl-tRNA binding site. In Streptococcus uberis (strain ATCC BAA-854 / 0140J), this protein is Large ribosomal subunit protein bL19.